Reading from the N-terminus, the 153-residue chain is MKSVNIFTDGSCLGNPGPGGIGVVLRYNQHQKKVSQGYFQTTNNRMELRAVIEGLSMLKEACNVTLYSDSQYMKNGITKWIFKWKKSNWKTANGKAVKNKDLWLLLDEKIQIHYIEWKWVKGHSGHYENEICDELAKLGANNPTLEDVGYQPA.

An RNase H type-1 domain is found at 1-141 (MKSVNIFTDG…CDELAKLGAN (141 aa)). D9, E47, D69, and D133 together coordinate Mg(2+).

It belongs to the RNase H family. In terms of assembly, monomer. It depends on Mg(2+) as a cofactor.

It localises to the cytoplasm. The enzyme catalyses Endonucleolytic cleavage to 5'-phosphomonoester.. In terms of biological role, endonuclease that specifically degrades the RNA of RNA-DNA hybrids. In Haemophilus ducreyi (strain 35000HP / ATCC 700724), this protein is Ribonuclease HI.